The chain runs to 217 residues: Adenylate kinase (217 aa).

10–15 (GAGKGT) is an ATP binding site. Residues 30-59 (STGDILRAAVSEMTPMGVKAKGYMESGALV) form an NMP region. AMP-binding positions include T31, R36, 57–59 (ALV), 85–88 (GFPR), and Q92. Residues 126-163 (GRRTCRLCGKGYHVVFDPPRVSGRCDECLGELFQRDDD) form an LID region. Residue R127 participates in ATP binding. The Zn(2+) site is built by C130, C133, C150, and C153. Residues R160 and R171 each contribute to the AMP site. G199 is a binding site for ATP.

Belongs to the adenylate kinase family. In terms of assembly, monomer.

The protein localises to the cytoplasm. The catalysed reaction is AMP + ATP = 2 ADP. It functions in the pathway purine metabolism; AMP biosynthesis via salvage pathway; AMP from ADP: step 1/1. In terms of biological role, catalyzes the reversible transfer of the terminal phosphate group between ATP and AMP. Plays an important role in cellular energy homeostasis and in adenine nucleotide metabolism. The polypeptide is Adenylate kinase (Geotalea uraniireducens (strain Rf4) (Geobacter uraniireducens)).